We begin with the raw amino-acid sequence, 395 residues long: Argininosuccinate synthase (395 aa).

ATP contacts are provided by residues 10–18 and alanine 37; that span reads AYSGGLDTS. L-citrulline contacts are provided by tyrosine 88 and serine 93. Residue glycine 118 participates in ATP binding. The L-aspartate site is built by threonine 120, asparagine 124, and aspartate 125. Asparagine 124 is a binding site for L-citrulline. L-citrulline is bound by residues arginine 128, serine 179, serine 188, glutamate 264, and tyrosine 276.

Belongs to the argininosuccinate synthase family. Type 1 subfamily. Homotetramer.

The protein localises to the cytoplasm. The enzyme catalyses L-citrulline + L-aspartate + ATP = 2-(N(omega)-L-arginino)succinate + AMP + diphosphate + H(+). It functions in the pathway amino-acid biosynthesis; L-arginine biosynthesis; L-arginine from L-ornithine and carbamoyl phosphate: step 2/3. This is Argininosuccinate synthase from Pelagibacter ubique (strain HTCC1062).